Reading from the N-terminus, the 205-residue chain is FMN reductase (NADH) RutF (205 aa).

Positions 171-205 (PRAPRSGSAPAEPARAARALGARPAEGPALALRSA) are disordered.

It belongs to the non-flavoprotein flavin reductase family. RutF subfamily.

It carries out the reaction FMNH2 + NAD(+) = FMN + NADH + 2 H(+). Catalyzes the reduction of FMN to FMNH2 which is used to reduce pyrimidine by RutA via the Rut pathway. This is FMN reductase (NADH) RutF from Methylorubrum extorquens (strain DSM 6343 / CIP 106787 / DM4) (Methylobacterium extorquens).